The sequence spans 352 residues: C-C chemokine receptor type 5 (352 aa).

Over 1–30 the chain is Extracellular; that stretch reads MDYQVSSPTYDIDYYTSEPCQKINVKQIAA. Residue tyrosine 3 is modified to Sulfotyrosine. O-linked (GalNAc...) serine glycosylation is found at serine 6 and serine 7. A sulfotyrosine mark is found at tyrosine 10, tyrosine 14, and tyrosine 15. Disulfide bonds link cysteine 20-cysteine 269 and cysteine 101-cysteine 178. A helical transmembrane segment spans residues 31–58; the sequence is RLLPPLYSLVFIFGFVGNMLVILILINC. The Cytoplasmic segment spans residues 59–68; it reads KRLKSMTDIY. A helical membrane pass occupies residues 69–89; it reads LLNLAISDLFFLLTVPFWAHY. Residues 90 to 102 are Extracellular-facing; it reads AAAQWDFGNTMCQ. The chain crosses the membrane as a helical span at residues 103-124; that stretch reads LLTGLYFIGFFSGIFFIILLTI. Residues 125-141 are Cytoplasmic-facing; it reads DRYLAIVHAVFALKART. A helical membrane pass occupies residues 142–166; sequence VTFGVVTSVITWVVAVFASLPGIIF. Over 167-198 the chain is Extracellular; that stretch reads TRSQKEGLHYTCSSHFPYSQYQFWKNFQTLKI. The helical transmembrane segment at 199-218 threads the bilayer; the sequence is VILGLVLPLLVMVICYSGIL. Topologically, residues 219–235 are cytoplasmic; sequence KTLLRCRNEKKRHRAVR. The chain crosses the membrane as a helical span at residues 236–260; it reads LIFTIMIVYFLFWAPYNIVLLLNTF. At 261 to 277 the chain is on the extracellular side; the sequence is QEFFGLNNCSSSNRLDQ. Residues 278-301 traverse the membrane as a helical segment; it reads AMQVTETLGMTHCCINPIIYAFVG. At 302 to 352 the chain is on the cytoplasmic side; the sequence is EKFRNYLLVFFQKHIAKHFCKCCSIFQQEAPERASSVYTRSTGEQEISVGL. 3 S-palmitoyl cysteine lipidation sites follow: cysteine 321, cysteine 323, and cysteine 324. Phosphoserine; by BARK1 is present on residues serine 336, serine 337, serine 342, and serine 349.

This sequence belongs to the G-protein coupled receptor 1 family. In terms of assembly, interacts with PRAF2. Efficient ligand binding to CCL3/MIP-1alpha and CCL4/MIP-1beta requires sulfation, O-glycosylation and sialic acid modifications. Glycosylation on Ser-6 is required for efficient binding of CCL4. Interacts with GRK2. Interacts with ARRB1 and ARRB2. Interacts with CNIH4. Interacts with S100A4; this interaction stimulates T-lymphocyte chemotaxis. In terms of processing, sulfated on at least 2 of the N-terminal tyrosines. Sulfation is required for efficient binding of the chemokines, CCL3 and CCL4. Palmitoylation in the C-terminal is important for cell surface expression. Post-translationally, phosphorylation on serine residues in the C-terminal is stimulated by binding CC chemokines especially by APO-RANTES. In terms of processing, O-glycosylated, but not N-glycosylated. Ser-6 appears to be the major site even if Ser-7 may be also O-glycosylated. Also sialylated glycans present which contribute to chemokine binding. Thr-16 and Ser-17 may also be glycosylated and, if so, with small moieties such as a T-antigen.

It is found in the cell membrane. Receptor for a number of inflammatory CC-chemokines including CCL3/MIP-1-alpha, CCL4/MIP-1-beta and RANTES and subsequently transduces a signal by increasing the intracellular calcium ion level. May play a role in the control of granulocytic lineage proliferation or differentiation. Participates in T-lymphocyte migration to the infection site by acting as a chemotactic receptor. This Symphalangus syndactylus (Siamang) protein is C-C chemokine receptor type 5 (CCR5).